An 83-amino-acid polypeptide reads, in one-letter code: RNA-binding protein Hfq (83 aa).

The Sm domain occupies 9–68 (DPYLNALRKERIPVSIFLVNGIKLQGQIESFDQFVILLKNTVSQMVYKHAISTVVPARNV).

The protein belongs to the Hfq family. Homohexamer.

Functionally, RNA chaperone that binds small regulatory RNA (sRNAs) and mRNAs to facilitate mRNA translational regulation in response to envelope stress, environmental stress and changes in metabolite concentrations. Also binds with high specificity to tRNAs. In Hahella chejuensis (strain KCTC 2396), this protein is RNA-binding protein Hfq.